The chain runs to 197 residues: Recombination protein RecR (197 aa).

The segment at 57–72 (CSVCFGITEDDPCRFC) adopts a C4-type zinc-finger fold. Positions 79 to 174 (GAICVVEEPQ…RVTRLAHGIP (96 aa)) constitute a Toprim domain.

This sequence belongs to the RecR family.

May play a role in DNA repair. It seems to be involved in an RecBC-independent recombinational process of DNA repair. It may act with RecF and RecO. This Geobacter sulfurreducens (strain ATCC 51573 / DSM 12127 / PCA) protein is Recombination protein RecR.